Consider the following 660-residue polypeptide: Bifunctional polymyxin resistance protein ArnA (660 aa).

Residues Met-1–Leu-304 are formyltransferase ArnAFT. The Proton donor; for formyltransferase activity role is filled by His-104. (6R)-10-formyltetrahydrofolate contacts are provided by residues Arg-114 and Thr-136 to Asp-140. The segment at Arg-314 to Gln-660 is dehydrogenase ArnADH. Residues Asp-347 and Asp-368–Ile-369 each bind NAD(+). Residues Ala-393, Tyr-398, and Thr-432 to Ser-433 contribute to the UDP-alpha-D-glucuronate site. The active-site Proton acceptor; for decarboxylase activity is Glu-434. Residues Arg-460, Asn-492, Lys-526 to Arg-535, and Tyr-613 contribute to the UDP-alpha-D-glucuronate site. Arg-619 (proton donor; for decarboxylase activity) is an active-site residue.

This sequence in the N-terminal section; belongs to the Fmt family. UDP-L-Ara4N formyltransferase subfamily. In the C-terminal section; belongs to the NAD(P)-dependent epimerase/dehydratase family. UDP-glucuronic acid decarboxylase subfamily. In terms of assembly, homohexamer, formed by a dimer of trimers.

It carries out the reaction UDP-alpha-D-glucuronate + NAD(+) = UDP-beta-L-threo-pentopyranos-4-ulose + CO2 + NADH. It catalyses the reaction UDP-4-amino-4-deoxy-beta-L-arabinose + (6R)-10-formyltetrahydrofolate = UDP-4-deoxy-4-formamido-beta-L-arabinose + (6S)-5,6,7,8-tetrahydrofolate + H(+). It participates in nucleotide-sugar biosynthesis; UDP-4-deoxy-4-formamido-beta-L-arabinose biosynthesis; UDP-4-deoxy-4-formamido-beta-L-arabinose from UDP-alpha-D-glucuronate: step 1/3. It functions in the pathway nucleotide-sugar biosynthesis; UDP-4-deoxy-4-formamido-beta-L-arabinose biosynthesis; UDP-4-deoxy-4-formamido-beta-L-arabinose from UDP-alpha-D-glucuronate: step 3/3. Its pathway is bacterial outer membrane biogenesis; lipopolysaccharide biosynthesis. Functionally, bifunctional enzyme that catalyzes the oxidative decarboxylation of UDP-glucuronic acid (UDP-GlcUA) to UDP-4-keto-arabinose (UDP-Ara4O) and the addition of a formyl group to UDP-4-amino-4-deoxy-L-arabinose (UDP-L-Ara4N) to form UDP-L-4-formamido-arabinose (UDP-L-Ara4FN). The modified arabinose is attached to lipid A and is required for resistance to polymyxin and cationic antimicrobial peptides. This is Bifunctional polymyxin resistance protein ArnA from Sodalis glossinidius (strain morsitans).